The sequence spans 71 residues: Large ribosomal subunit protein bL31 (71 aa).

Residues cysteine 16, cysteine 18, cysteine 37, and cysteine 40 each coordinate Zn(2+).

It belongs to the bacterial ribosomal protein bL31 family. Type A subfamily. As to quaternary structure, part of the 50S ribosomal subunit. Zn(2+) is required as a cofactor.

Functionally, binds the 23S rRNA. The sequence is that of Large ribosomal subunit protein bL31 from Serratia proteamaculans (strain 568).